We begin with the raw amino-acid sequence, 255 residues long: uncharacterized protein (255 aa).

An N-terminal signal peptide occupies residues 1–23; the sequence is MKRLNTLVLYISFLILIISIVAG. The N-palmitoyl cysteine moiety is linked to residue Cys24. Cys24 is lipidated: S-diacylglycerol cysteine.

This sequence belongs to the staphylococcal tandem lipoprotein family.

It is found in the cell membrane. This is an uncharacterized protein from Staphylococcus aureus (strain N315).